Here is a 344-residue protein sequence, read N- to C-terminus: Sulfate/thiosulfate import ATP-binding protein CysA (344 aa).

Residues 9 to 239 (IQVSQVSKQF…PATPFVMSFI (231 aa)) enclose the ABC transporter domain. Position 41–48 (41–48 (GPSGSGKS)) interacts with ATP.

The protein belongs to the ABC transporter superfamily. Sulfate/tungstate importer (TC 3.A.1.6) family. In terms of assembly, the complex is composed of two ATP-binding proteins (CysA), two transmembrane proteins (CysT and CysW) and a solute-binding protein (CysP).

Its subcellular location is the cell inner membrane. It catalyses the reaction sulfate(out) + ATP + H2O = sulfate(in) + ADP + phosphate + H(+). The enzyme catalyses thiosulfate(out) + ATP + H2O = thiosulfate(in) + ADP + phosphate + H(+). Functionally, part of the ABC transporter complex CysAWTP involved in sulfate/thiosulfate import. Responsible for energy coupling to the transport system. The polypeptide is Sulfate/thiosulfate import ATP-binding protein CysA (Synechococcus elongatus (strain ATCC 33912 / PCC 7942 / FACHB-805) (Anacystis nidulans R2)).